The following is a 320-amino-acid chain: Malate dehydrogenase (320 aa).

NAD(+) is bound by residues 10–15 and Asp34; that span reads GSGMIG. Substrate contacts are provided by Arg83 and Arg89. Residues Asn96 and 119-121 each bind NAD(+); that span reads ITN. Positions 121 and 152 each coordinate substrate. His176 acts as the Proton acceptor in catalysis.

The protein belongs to the LDH/MDH superfamily. MDH type 3 family.

It carries out the reaction (S)-malate + NAD(+) = oxaloacetate + NADH + H(+). Catalyzes the reversible oxidation of malate to oxaloacetate. This is Malate dehydrogenase from Maricaulis maris (strain MCS10) (Caulobacter maris).